Reading from the N-terminus, the 168-residue chain is Probable chemoreceptor glutamine deamidase CheD 2 (168 aa).

The protein belongs to the CheD family.

The catalysed reaction is L-glutaminyl-[protein] + H2O = L-glutamyl-[protein] + NH4(+). Probably deamidates glutamine residues to glutamate on methyl-accepting chemotaxis receptors (MCPs), playing an important role in chemotaxis. The protein is Probable chemoreceptor glutamine deamidase CheD 2 of Leptospira interrogans serogroup Icterohaemorrhagiae serovar copenhageni (strain Fiocruz L1-130).